The sequence spans 209 residues: MSGKKRTASSNRWMLEHFDDHYVKLAQKRGLRSRAAFKLEELQQKDQLIRPGMTVVDLGAAPGGWSQVAVKLVGDKGKVIACDILPMDPIVGVDFLQGDFREEKVLEALLTRVGADKVDVVLSDMAPNMSGSDGVDQPRAMYLVELALDMCHQVLAPNGSFAVKVFQGEGFDEYMKAVKEAFKVVKTRKPDSSRARSREVYLVATGYKL.

The S-adenosyl-L-methionine site is built by G63, W65, D83, D99, and D124. K164 functions as the Proton acceptor in the catalytic mechanism.

The protein belongs to the class I-like SAM-binding methyltransferase superfamily. RNA methyltransferase RlmE family.

The protein resides in the cytoplasm. The catalysed reaction is uridine(2552) in 23S rRNA + S-adenosyl-L-methionine = 2'-O-methyluridine(2552) in 23S rRNA + S-adenosyl-L-homocysteine + H(+). Specifically methylates the uridine in position 2552 of 23S rRNA at the 2'-O position of the ribose in the fully assembled 50S ribosomal subunit. The polypeptide is Ribosomal RNA large subunit methyltransferase E (Shewanella oneidensis (strain ATCC 700550 / JCM 31522 / CIP 106686 / LMG 19005 / NCIMB 14063 / MR-1)).